The chain runs to 258 residues: Hydroxyacylglutathione hydrolase (258 aa).

The Zn(2+) site is built by H55, H57, D59, H60, H115, D132, and H170.

It belongs to the metallo-beta-lactamase superfamily. Glyoxalase II family. In terms of assembly, monomer. The cofactor is Zn(2+).

The enzyme catalyses an S-(2-hydroxyacyl)glutathione + H2O = a 2-hydroxy carboxylate + glutathione + H(+). It participates in secondary metabolite metabolism; methylglyoxal degradation; (R)-lactate from methylglyoxal: step 2/2. Functionally, thiolesterase that catalyzes the hydrolysis of S-D-lactoyl-glutathione to form glutathione and D-lactic acid. This Shewanella denitrificans (strain OS217 / ATCC BAA-1090 / DSM 15013) protein is Hydroxyacylglutathione hydrolase.